Reading from the N-terminus, the 281-residue chain is Phosphate import ATP-binding protein PstB 1 (281 aa).

The interval 1-34 (MTENTAETADESSDGGVTATTGAATTTPTTPPEP) is disordered. A compositionally biased stretch (low complexity) spans 15–28 (GGVTATTGAATTTP). One can recognise an ABC transporter domain in the interval 36–276 (IRARDLDVFY…PEHQRVEEYI (241 aa)). ATP is bound at residue 68 to 75 (GPSGCGKS).

The protein belongs to the ABC transporter superfamily. Phosphate importer (TC 3.A.1.7) family. As to quaternary structure, the complex is composed of two ATP-binding proteins (PstB), two transmembrane proteins (PstC and PstA) and a solute-binding protein (PstS).

It is found in the cell membrane. It carries out the reaction phosphate(out) + ATP + H2O = ADP + 2 phosphate(in) + H(+). In terms of biological role, part of the ABC transporter complex PstSACB involved in phosphate import. Responsible for energy coupling to the transport system. The polypeptide is Phosphate import ATP-binding protein PstB 1 (Halobacterium salinarum (strain ATCC 700922 / JCM 11081 / NRC-1) (Halobacterium halobium)).